Reading from the N-terminus, the 217-residue chain is Monomethylamine corrinoid protein 2 (217 aa).

Positions 1–91 (MTNTEIFDKL…ELEKNKKEGD (91 aa)) constitute a B12-binding N-terminal domain. A B12-binding domain is found at 93–217 (AGLAITFVAE…AAKVALEVMK (125 aa)). Histidine 106 provides a ligand contact to methylcob(III)alamin.

This sequence belongs to the methylamine corrinoid protein family. As to quaternary structure, can form a complex with MtmB.

The protein operates within one-carbon metabolism; methanogenesis from methylamine. In terms of biological role, acts as a methyl group carrier between MtmB and MtbA. This chain is Monomethylamine corrinoid protein 2 (mtmC2), found in Methanosarcina barkeri.